A 268-amino-acid polypeptide reads, in one-letter code: Thiazole synthase (268 aa).

K96 acts as the Schiff-base intermediate with DXP in catalysis. 1-deoxy-D-xylulose 5-phosphate is bound by residues G157, 185–186 (AG), and 207–208 (NT). Residues 238-268 (PMRPREAASPSSPVEGVPFTPTGPRPGRGPQ) form a disordered region. The span at 258–268 (PTGPRPGRGPQ) shows a compositional bias: pro residues.

This sequence belongs to the ThiG family. As to quaternary structure, homotetramer. Forms heterodimers with either ThiH or ThiS.

The protein localises to the cytoplasm. It carries out the reaction [ThiS sulfur-carrier protein]-C-terminal-Gly-aminoethanethioate + 2-iminoacetate + 1-deoxy-D-xylulose 5-phosphate = [ThiS sulfur-carrier protein]-C-terminal Gly-Gly + 2-[(2R,5Z)-2-carboxy-4-methylthiazol-5(2H)-ylidene]ethyl phosphate + 2 H2O + H(+). Its pathway is cofactor biosynthesis; thiamine diphosphate biosynthesis. Functionally, catalyzes the rearrangement of 1-deoxy-D-xylulose 5-phosphate (DXP) to produce the thiazole phosphate moiety of thiamine. Sulfur is provided by the thiocarboxylate moiety of the carrier protein ThiS. In vitro, sulfur can be provided by H(2)S. The chain is Thiazole synthase from Thermus thermophilus (strain ATCC 27634 / DSM 579 / HB8).